We begin with the raw amino-acid sequence, 235 residues long: Probable GTP-binding protein EngB (235 aa).

The region spanning 23–219 is the EngB-type G domain; it reads QVPEIAFAGR…NDKIIELLGL (197 aa). GTP is bound by residues 31 to 38, 58 to 62, 92 to 95, 159 to 162, and 193 to 200; these read GRSNAGKS, GRTQH, DLPG, TKSD, and FTAQMFSA. Residues serine 38 and threonine 60 each coordinate Mg(2+).

Belongs to the TRAFAC class TrmE-Era-EngA-EngB-Septin-like GTPase superfamily. EngB GTPase family. Requires Mg(2+) as cofactor.

Necessary for normal cell division and for the maintenance of normal septation. In Janthinobacterium sp. (strain Marseille) (Minibacterium massiliensis), this protein is Probable GTP-binding protein EngB.